The primary structure comprises 1053 residues: Serine/threonine-protein phosphatase 6 regulatory ankyrin repeat subunit A (1053 aa).

ANK repeat units follow at residues 40-69 (EKRT…RVNA), 73-102 (KWLT…DVNA), 106-135 (NWQT…NVNV), 139-168 (AGRT…NINA), 172-201 (KDRR…EVTC), 205-234 (KSYT…DMNE), 238-267 (YGNT…NVNQ), 271-301 (KGFT…DVNM), 305-334 (DGKT…VIDC), 338-367 (NGNT…DTAK), 371-400 (HGMF…DIDT), 404-433 (FGRT…DFNK), 437-466 (FGRS…SVND), 470-500 (RGCT…NPGI), 504-534 (QGYN…DVLM), 549-578 (ATIS…DLDV), 582-611 (SGRT…SILV), 616-645 (LKRT…PQNA), 652-681 (NGQT…NVDA), 685-714 (WGRT…KCLL), 718-747 (RGRT…SVDA), 755-786 (HGYT…KIDG), 788-817 (AFSP…SIVN), 822-851 (KGRT…QVNS), 855-885 (TGKT…DLTL), 889-918 (SKNT…DRNL), and 925-954 (ALQT…SVLA). Serine 1007 and serine 1011 each carry phosphoserine.

In terms of assembly, protein phosphatase 6 (PP6) holoenzyme is proposed to be a heterotrimeric complex formed by the catalytic subunit, a SAPS domain-containing subunit (PP6R) and an ankyrin repeat-domain containing regulatory subunit (ARS). Interacts with PPP1C and HNRPK. Interacts with PPP6C, PPP6R1 and PPP6R3. Post-translationally, ubiquitinated by the ECS(RAB40C) complex leading to its degradation and decreased PP6 activity. As to expression, widely expressed (at protein level).

It localises to the nucleus. The protein localises to the nucleoplasm. The protein resides in the cytoplasm. Its subcellular location is the cytosol. It is found in the cell projection. It localises to the lamellipodium. In terms of biological role, putative regulatory subunit of protein phosphatase 6 (PP6) that may be involved in the recognition of phosphoprotein substrates. Involved in the PP6-mediated dephosphorylation of NFKBIE opposing its degradation in response to TNF-alpha. Selectively inhibits the phosphatase activity of PPP1C. Targets PPP1C to modulate HNRPK phosphorylation. Involved in the PP6-mediated dephosphorylation of MOB1 and induced focal adhesion assembly during cell migration. In Mus musculus (Mouse), this protein is Serine/threonine-protein phosphatase 6 regulatory ankyrin repeat subunit A (Ankrd28).